Consider the following 146-residue polypeptide: Aminoglycoside N(6')-acetyltransferase type 1 (146 aa).

Residues 1-146 form the N-acetyltransferase domain; the sequence is MIVICDHDNL…RVVFYRKTLG (146 aa). Substrate is bound by residues tryptophan 21, tyrosine 66, glutamate 79, and aspartate 115. Asparagine 120 contacts acetyl-CoA. Substrate is bound at residue glutamate 136.

As to quaternary structure, homodimer.

The catalysed reaction is kanamycin B + acetyl-CoA = N(6')-acetylkanamycin B + CoA + H(+). Functionally, catalyzes the transfer of an acetyl group from acetyl-CoA to the 6'-amino group of aminoglycoside molecules conferring resistance to antibiotics containing the purpurosamine ring including amikacin, tobramycin, netilmicin, isepamicin and sisomicin. This Serratia marcescens protein is Aminoglycoside N(6')-acetyltransferase type 1.